The sequence spans 300 residues: D-alanine--D-alanine ligase (300 aa).

The 195-residue stretch at lysine 99 to lysine 293 folds into the ATP-grasp domain. An ATP-binding site is contributed by isoleucine 126–threonine 181. Positions 248, 260, and 262 each coordinate Mg(2+).

This sequence belongs to the D-alanine--D-alanine ligase family. Mg(2+) is required as a cofactor. The cofactor is Mn(2+).

Its subcellular location is the cytoplasm. The catalysed reaction is 2 D-alanine + ATP = D-alanyl-D-alanine + ADP + phosphate + H(+). Its pathway is cell wall biogenesis; peptidoglycan biosynthesis. Functionally, cell wall formation. This Clostridium botulinum (strain Langeland / NCTC 10281 / Type F) protein is D-alanine--D-alanine ligase.